Reading from the N-terminus, the 359-residue chain is 4-hydroxy-3-methylbut-2-en-1-yl diphosphate synthase (flavodoxin) (359 aa).

4 residues coordinate [4Fe-4S] cluster: cysteine 265, cysteine 268, cysteine 300, and glutamate 307.

Belongs to the IspG family. The cofactor is [4Fe-4S] cluster.

It catalyses the reaction (2E)-4-hydroxy-3-methylbut-2-enyl diphosphate + oxidized [flavodoxin] + H2O + 2 H(+) = 2-C-methyl-D-erythritol 2,4-cyclic diphosphate + reduced [flavodoxin]. The protein operates within isoprenoid biosynthesis; isopentenyl diphosphate biosynthesis via DXP pathway; isopentenyl diphosphate from 1-deoxy-D-xylulose 5-phosphate: step 5/6. Its function is as follows. Converts 2C-methyl-D-erythritol 2,4-cyclodiphosphate (ME-2,4cPP) into 1-hydroxy-2-methyl-2-(E)-butenyl 4-diphosphate. This Lawsonia intracellularis (strain PHE/MN1-00) protein is 4-hydroxy-3-methylbut-2-en-1-yl diphosphate synthase (flavodoxin).